Here is a 353-residue protein sequence, read N- to C-terminus: Inactive ubiquitin thioesterase OTULINL (353 aa).

The segment at Met-1 to Lys-80 is required for membrane binding. In terms of domain architecture, OTU spans Lys-125–Phe-353.

It belongs to the peptidase C65 family. Otulin subfamily. As to quaternary structure, does not bind ubiquitin or ubiquitin-like proteins.

It localises to the cytoplasm. Its subcellular location is the endoplasmic reticulum membrane. It is found in the nucleus envelope. In terms of biological role, lacks deubiquitinase activity. This is Inactive ubiquitin thioesterase OTULINL from Mus musculus (Mouse).